The primary structure comprises 542 residues: Phosphoacetylglucosamine mutase (542 aa).

Methionine 1 carries the post-translational modification N-acetylmethionine. A Phosphothreonine modification is found at threonine 62. Serine 64 acts as the Phosphoserine intermediate in catalysis. Residues serine 64, aspartate 276, aspartate 278, and aspartate 280 each coordinate Mg(2+). Serine 64 carries the phosphoserine modification. Substrate contacts are provided by residues 370–372 (EAN), 496–500 (RPSGT), and arginine 505.

The protein belongs to the phosphohexose mutase family. Requires Mg(2+) as cofactor.

The enzyme catalyses N-acetyl-alpha-D-glucosamine 1-phosphate = N-acetyl-D-glucosamine 6-phosphate. It functions in the pathway nucleotide-sugar biosynthesis; UDP-N-acetyl-alpha-D-glucosamine biosynthesis; N-acetyl-alpha-D-glucosamine 1-phosphate from alpha-D-glucosamine 6-phosphate (route I): step 2/2. Catalyzes the conversion of GlcNAc-6-P into GlcNAc-1-P during the synthesis of uridine diphosphate/UDP-GlcNAc, a sugar nucleotide critical to multiple glycosylation pathways including protein N- and O-glycosylation. The sequence is that of Phosphoacetylglucosamine mutase from Mus musculus (Mouse).